The primary structure comprises 269 residues: MNTVPRYAVFGNPVAHSKSPQIHRQFALQEGVEIEYERICADTGGFAQAVEAFFADGGRGANVTVPFKQEAFALSDEHSERALAAGAVNTLILLENGKIRGDNTDGIGLTDDISKRLGVELSGKTVLLLGAGGAVRGVIPVLKEYRPARIVIANRTHTKAAEMAAHFGIEAIPLDELEGGFDIIINGTSGGLSGQLPAVSPKVFEHCTLAYDMVYGEAAEPFLAFARQSGAKQTADGLGMLVGQAAASYRLWRGFAPDVLPVVQYMREL.

Shikimate is bound by residues 17–19 (SKS) and T64. K68 acts as the Proton acceptor in catalysis. E80 contacts NADP(+). Shikimate contacts are provided by N89 and D105. Residues 130 to 134 (GAGGA), 154 to 159 (NRTHTK), and M213 each bind NADP(+). Y215 is a binding site for shikimate. G237 contributes to the NADP(+) binding site.

The protein belongs to the shikimate dehydrogenase family. As to quaternary structure, homodimer.

The enzyme catalyses shikimate + NADP(+) = 3-dehydroshikimate + NADPH + H(+). Its pathway is metabolic intermediate biosynthesis; chorismate biosynthesis; chorismate from D-erythrose 4-phosphate and phosphoenolpyruvate: step 4/7. Functionally, involved in the biosynthesis of the chorismate, which leads to the biosynthesis of aromatic amino acids. Catalyzes the reversible NADPH linked reduction of 3-dehydroshikimate (DHSA) to yield shikimate (SA). The sequence is that of Shikimate dehydrogenase (NADP(+)) from Neisseria mucosa.